The primary structure comprises 228 residues: MTVYKQRFVLDTTAFTDRGVVDELGDGDLCEAVTRLLDLIGRARMELAISCYIPYPTVYRELKGFLERNGCPELLSRIDTWIVKKTPNRYEVKVPARLFMAYVKDMRERLDRGRKRAEKAIWEAALEAYEIMLREEADVPKERIIREVIGETVRRFRRKYRQTVRHGTLDSAPDLDVLLLAKELDAAVVASDEGIERWARELGLRFMPACSFPDMIEEYLRMSREVEG.

It belongs to the HARP family.

The enzyme catalyses Endonucleolytic cleavage of RNA, removing 5'-extranucleotides from tRNA precursor.. In terms of biological role, RNA-free RNase P that catalyzes the removal of the 5'-leader sequence from pre-tRNA to produce the mature 5'-terminus. This is RNA-free ribonuclease P from Methanopyrus kandleri (strain AV19 / DSM 6324 / JCM 9639 / NBRC 100938).